A 125-amino-acid polypeptide reads, in one-letter code: MPTISQLIRKGRKTVASKSTAPALKECPQKRGVCTVVKTTTPKKPNSALRKIARVRLTNGYEVSAYIPGIGHNLQEHSVVLIRGGRVKDLPGVRYHIVRGALDSAGVADRLQGRSKYGAKRPKQK.

Asp89 is subject to 3-methylthioaspartic acid.

It belongs to the universal ribosomal protein uS12 family. In terms of assembly, part of the 30S ribosomal subunit. Contacts proteins S8 and S17. May interact with IF1 in the 30S initiation complex.

With S4 and S5 plays an important role in translational accuracy. Its function is as follows. Interacts with and stabilizes bases of the 16S rRNA that are involved in tRNA selection in the A site and with the mRNA backbone. Located at the interface of the 30S and 50S subunits, it traverses the body of the 30S subunit contacting proteins on the other side and probably holding the rRNA structure together. The combined cluster of proteins S8, S12 and S17 appears to hold together the shoulder and platform of the 30S subunit. The protein is Small ribosomal subunit protein uS12 of Clostridium kluyveri (strain ATCC 8527 / DSM 555 / NBRC 12016 / NCIMB 10680 / K1).